A 309-amino-acid polypeptide reads, in one-letter code: Mitochondrial fission regulator 1-like (309 aa).

The tract at residues D189 to V221 is disordered. Residues V190–S211 are compositionally biased toward acidic residues. The residue at position 253 (S253) is a Phosphoserine.

It belongs to the MTFR1 family.

The protein localises to the mitochondrion outer membrane. Mitochondrial protein required for adaptation of miochondrial dynamics to metabolic changes. Regulates mitochondrial morphology at steady state and mediates AMPK-dependent stress-induced mitochondrial fragmentation via the control of OPA1 levels. This chain is Mitochondrial fission regulator 1-like (mtfr1l), found in Danio rerio (Zebrafish).